A 366-amino-acid polypeptide reads, in one-letter code: Isocitrate dehydrogenase [NAD] subunit alpha, mitochondrial (366 aa).

A mitochondrion-targeting transit peptide spans 1–27 (MAGPAWISKVSRLLGAFHNQKQVTRGF). Lys-77 is subject to N6-succinyllysine. Position 101 is a phosphothreonine (Thr-101). Substrate is bound by residues Arg-115, Arg-125, and Arg-146. Lys-223 bears the N6-acetyllysine mark. Mg(2+) is bound by residues Asp-233, Asp-257, and Asp-261. Lys-343 is modified (N6-acetyllysine; alternate). Lys-343 bears the N6-succinyllysine; alternate mark. At Lys-350 the chain carries N6-succinyllysine.

The protein belongs to the isocitrate and isopropylmalate dehydrogenases family. Heterooligomer of subunits alpha (IDH3A), beta (IDH3B), and gamma (IDH3G) in the apparent ratio of 2:1:1. The heterodimer containing one IDH3A and one IDH3B subunit and the heterodimer containing one IDH3A and one IDH3G subunit assemble into a heterotetramer (which contains two subunits of IDH3A, one of IDH3B and one of IDH3G) and further into the heterooctamer. The cofactor is Mg(2+). Mn(2+) serves as cofactor.

The protein localises to the mitochondrion. It catalyses the reaction D-threo-isocitrate + NAD(+) = 2-oxoglutarate + CO2 + NADH. The heterotetramer and the heterodimer composed of IDH3A and IDH3G subunits can be allosterically activated by citrate (CIT) or/and ADP, and the two activators can act independently or synergistically. The heterodimer composed of IDH3A and IDH3B subunits cannot be allosterically regulated and the allosteric regulation of the heterotetramer is through the IDH3G subunit and not the IDH3B subunit. The IDH3G subunit contains the allosteric site which consists of a CIT-binding site and an ADP-binding site, and the binding of CIT and ADP causes conformational changes at the allosteric site which are transmitted to the active site in the catalytic subunit (IDH3A) through a cascade of conformational changes at the heterodimer interface, leading to stabilization of the isocitrate-binding at the active site and thus activation of the enzyme. ATP can activate the heterotetramer and the heterodimer composed of IDH3A and IDH3G subunits at low concentrations but inhibits their activities at high concentrations, whereas ATP exhibits only inhibitory effect on the heterodimer composed of IDH3A and IDH3B subunits. In terms of biological role, catalytic subunit of the enzyme which catalyzes the decarboxylation of isocitrate (ICT) into alpha-ketoglutarate. The heterodimer composed of the alpha (IDH3A) and beta (IDH3B) subunits and the heterodimer composed of the alpha (IDH3A) and gamma (IDH3G) subunits, have considerable basal activity but the full activity of the heterotetramer (containing two subunits of IDH3A, one of IDH3B and one of IDH3G) requires the assembly and cooperative function of both heterodimers. This is Isocitrate dehydrogenase [NAD] subunit alpha, mitochondrial (IDH3A) from Sus scrofa (Pig).